The primary structure comprises 280 residues: 4-hydroxy-3-methylbut-2-enyl diphosphate reductase (280 aa).

Position 12 (Cys-12) interacts with [4Fe-4S] cluster. (2E)-4-hydroxy-3-methylbut-2-enyl diphosphate contacts are provided by His-40 and His-72. Dimethylallyl diphosphate contacts are provided by His-40 and His-72. Residues His-40 and His-72 each contribute to the isopentenyl diphosphate site. Cys-94 contributes to the [4Fe-4S] cluster binding site. His-122 contacts (2E)-4-hydroxy-3-methylbut-2-enyl diphosphate. His-122 contributes to the dimethylallyl diphosphate binding site. Isopentenyl diphosphate is bound at residue His-122. The active-site Proton donor is Glu-124. Thr-160 contacts (2E)-4-hydroxy-3-methylbut-2-enyl diphosphate. Cys-188 serves as a coordination point for [4Fe-4S] cluster. (2E)-4-hydroxy-3-methylbut-2-enyl diphosphate-binding residues include Ser-216, Asn-218, and Ser-260. Positions 216, 218, and 260 each coordinate dimethylallyl diphosphate. Positions 216, 218, and 260 each coordinate isopentenyl diphosphate.

This sequence belongs to the IspH family. [4Fe-4S] cluster is required as a cofactor.

It carries out the reaction isopentenyl diphosphate + 2 oxidized [2Fe-2S]-[ferredoxin] + H2O = (2E)-4-hydroxy-3-methylbut-2-enyl diphosphate + 2 reduced [2Fe-2S]-[ferredoxin] + 2 H(+). The catalysed reaction is dimethylallyl diphosphate + 2 oxidized [2Fe-2S]-[ferredoxin] + H2O = (2E)-4-hydroxy-3-methylbut-2-enyl diphosphate + 2 reduced [2Fe-2S]-[ferredoxin] + 2 H(+). It functions in the pathway isoprenoid biosynthesis; dimethylallyl diphosphate biosynthesis; dimethylallyl diphosphate from (2E)-4-hydroxy-3-methylbutenyl diphosphate: step 1/1. Its pathway is isoprenoid biosynthesis; isopentenyl diphosphate biosynthesis via DXP pathway; isopentenyl diphosphate from 1-deoxy-D-xylulose 5-phosphate: step 6/6. Functionally, catalyzes the conversion of 1-hydroxy-2-methyl-2-(E)-butenyl 4-diphosphate (HMBPP) into a mixture of isopentenyl diphosphate (IPP) and dimethylallyl diphosphate (DMAPP). Acts in the terminal step of the DOXP/MEP pathway for isoprenoid precursor biosynthesis. This Pelobacter propionicus (strain DSM 2379 / NBRC 103807 / OttBd1) protein is 4-hydroxy-3-methylbut-2-enyl diphosphate reductase.